A 352-amino-acid chain; its full sequence is MAIVSSSAGRADSQPPAAKSRVVDASPLPEEASPAREDGLRPKRLEDYIGQRELKQVLGIAVKAAMGRGDALDHVLLYGPPGLGKTTMAMVLAEELGVKCRVTSAPALERPRDIVGLLVNLQPREVLFIDEIHRLTRVAEELLYPAMEDRRLDLTVGKGSTARTRALELPPFTLVGATTRAGALSSPLRDRFGLIQRLEFYGLEDLQAIVERAAGLLRLQLTAQACQEIARRCRGTPRIANRLLRRVRDVASVCGGESLIDAALVDEALTLHRVDARGLDASDRRLLDLLLESHGGGPVGLETLAAALGEDPATLEAVVEPFLLQLGFLQRTPRGRVVTGAGRRHLGWPELP.

Residues 1 to 42 (MAIVSSSAGRADSQPPAAKSRVVDASPLPEEASPAREDGLRP) form a disordered region. The segment at 13–201 (SQPPAAKSRV…FGLIQRLEFY (189 aa)) is large ATPase domain (RuvB-L). Positions 33–42 (SPAREDGLRP) are enriched in basic and acidic residues. The ATP site is built by Leu-40, Arg-41, Gly-82, Lys-85, Thr-86, Thr-87, Arg-191, Tyr-201, and Arg-238. Thr-86 provides a ligand contact to Mg(2+). Positions 202–273 (GLEDLQAIVE…LVDEALTLHR (72 aa)) are small ATPAse domain (RuvB-S). Positions 276–352 (ARGLDASDRR…RRHLGWPELP (77 aa)) are head domain (RuvB-H). Arg-331 and Arg-336 together coordinate DNA.

The protein belongs to the RuvB family. In terms of assembly, homohexamer. Forms an RuvA(8)-RuvB(12)-Holliday junction (HJ) complex. HJ DNA is sandwiched between 2 RuvA tetramers; dsDNA enters through RuvA and exits via RuvB. An RuvB hexamer assembles on each DNA strand where it exits the tetramer. Each RuvB hexamer is contacted by two RuvA subunits (via domain III) on 2 adjacent RuvB subunits; this complex drives branch migration. In the full resolvosome a probable DNA-RuvA(4)-RuvB(12)-RuvC(2) complex forms which resolves the HJ.

The protein resides in the cytoplasm. The enzyme catalyses ATP + H2O = ADP + phosphate + H(+). In terms of biological role, the RuvA-RuvB-RuvC complex processes Holliday junction (HJ) DNA during genetic recombination and DNA repair, while the RuvA-RuvB complex plays an important role in the rescue of blocked DNA replication forks via replication fork reversal (RFR). RuvA specifically binds to HJ cruciform DNA, conferring on it an open structure. The RuvB hexamer acts as an ATP-dependent pump, pulling dsDNA into and through the RuvAB complex. RuvB forms 2 homohexamers on either side of HJ DNA bound by 1 or 2 RuvA tetramers; 4 subunits per hexamer contact DNA at a time. Coordinated motions by a converter formed by DNA-disengaged RuvB subunits stimulates ATP hydrolysis and nucleotide exchange. Immobilization of the converter enables RuvB to convert the ATP-contained energy into a lever motion, pulling 2 nucleotides of DNA out of the RuvA tetramer per ATP hydrolyzed, thus driving DNA branch migration. The RuvB motors rotate together with the DNA substrate, which together with the progressing nucleotide cycle form the mechanistic basis for DNA recombination by continuous HJ branch migration. Branch migration allows RuvC to scan DNA until it finds its consensus sequence, where it cleaves and resolves cruciform DNA. The chain is Holliday junction branch migration complex subunit RuvB from Prochlorococcus marinus (strain MIT 9303).